Reading from the N-terminus, the 240-residue chain is U1 small nuclear ribonucleoprotein C (240 aa).

The Matrin-type zinc-finger motif lies at 4 to 36 (YYCEYCDIYLTHSSPVGRRQHIQGRKHISAKIE). Disordered stretches follow at residues 86–122 (GMKH…SKYH) and 175–240 (IDSD…SVDA). Composition is skewed to basic and acidic residues over residues 178–194 (DPVK…DNAI) and 203–219 (DQGD…HADH). The span at 226-240 (TDGTANGNDQVSVDA) shows a compositional bias: polar residues.

The protein belongs to the U1 small nuclear ribonucleoprotein C family. In terms of assembly, U1 snRNP is composed of the 7 core Sm proteins B/B', D1, D2, D3, E, F and G that assemble in a heptameric protein ring on the Sm site of the small nuclear RNA to form the core snRNP, and at least 3 U1 snRNP-specific proteins U1-70K, U1-A and U1-C. U1-C interacts with U1 snRNA and the 5' splice-site region of the pre-mRNA.

The protein localises to the nucleus. Functionally, component of the spliceosomal U1 snRNP, which is essential for recognition of the pre-mRNA 5' splice-site and the subsequent assembly of the spliceosome. U1-C is directly involved in initial 5' splice-site recognition for both constitutive and regulated alternative splicing. The interaction with the 5' splice-site seems to precede base-pairing between the pre-mRNA and the U1 snRNA. Stimulates commitment or early (E) complex formation by stabilizing the base pairing of the 5' end of the U1 snRNA and the 5' splice-site region. This is U1 small nuclear ribonucleoprotein C from Plasmodium vivax (strain Salvador I).